The following is a 507-amino-acid chain: ATP synthase subunit alpha, chloroplastic (507 aa).

Gly170 to Thr177 contacts ATP.

Belongs to the ATPase alpha/beta chains family. As to quaternary structure, F-type ATPases have 2 components, CF(1) - the catalytic core - and CF(0) - the membrane proton channel. CF(1) has five subunits: alpha(3), beta(3), gamma(1), delta(1), epsilon(1). CF(0) has four main subunits: a, b, b' and c.

The protein resides in the plastid. The protein localises to the chloroplast thylakoid membrane. It carries out the reaction ATP + H2O + 4 H(+)(in) = ADP + phosphate + 5 H(+)(out). Produces ATP from ADP in the presence of a proton gradient across the membrane. The alpha chain is a regulatory subunit. This is ATP synthase subunit alpha, chloroplastic from Piper cenocladum (Ant piper).